The primary structure comprises 350 residues: Probable galactose-1-phosphate uridylyltransferase (350 aa).

Residues 31–52 form a disordered region; the sequence is PWSGQQEKAQKNELPEFDPTNP. Zn(2+) is bound at residue cysteine 54. Residues 76–77 and asparagine 152 each bind UDP-alpha-D-glucose; that span reads ND. Histidine 163 is a binding site for Zn(2+). Histidine 165 functions as the Tele-UMP-histidine intermediate in the catalytic mechanism. UDP-alpha-D-glucose-binding positions include glutamine 167, 314–317, and 319–320; these read KFMV and FE.

The protein belongs to the galactose-1-phosphate uridylyltransferase type 1 family. Homodimer. The cofactor is Zn(2+).

It catalyses the reaction alpha-D-galactose 1-phosphate + UDP-alpha-D-glucose = alpha-D-glucose 1-phosphate + UDP-alpha-D-galactose. The protein operates within carbohydrate metabolism; galactose metabolism. The protein is Probable galactose-1-phosphate uridylyltransferase (Galt) of Drosophila melanogaster (Fruit fly).